A 444-amino-acid chain; its full sequence is Cortexillin-1 (444 aa).

The actin-binding stretch occupies residues 1–227 (MAGKDWEIVQ…VLYTSLFFHA (227 aa)). Calponin-homology (CH) domains follow at residues 8–115 (IVQE…RKYR) and 124–229 (KSSE…HAYR). Coiled-coil stretches lie at residues 227–352 (AYRA…TRIR) and 410–434 (LATK…DLKA).

The protein belongs to the cortexillin family. As to quaternary structure, homodimer; parallel.

Its subcellular location is the cytoplasm. It localises to the cytoskeleton. In terms of biological role, actin-bundling protein. When linked to F-actin the actin filaments form preferentially anti-parallel bundles that associate into meshworks. Plays a major role in cytokinesis. Negatively regulates cortical localization of rapgap1. This is Cortexillin-1 (ctxA) from Dictyostelium discoideum (Social amoeba).